Here is a 528-residue protein sequence, read N- to C-terminus: Lanosterol 14-alpha demethylase (528 aa).

Position 470 (C470) interacts with heme.

The protein belongs to the cytochrome P450 family. Heme serves as cofactor.

It localises to the membrane. The enzyme catalyses a 14alpha-methyl steroid + 3 reduced [NADPH--hemoprotein reductase] + 3 O2 = a Delta(14) steroid + formate + 3 oxidized [NADPH--hemoprotein reductase] + 4 H2O + 4 H(+). It catalyses the reaction a 14alpha-methyl steroid + reduced [NADPH--hemoprotein reductase] + O2 = a 14alpha-hydroxymethyl steroid + oxidized [NADPH--hemoprotein reductase] + H2O + H(+). It carries out the reaction a 14alpha-hydroxymethyl steroid + reduced [NADPH--hemoprotein reductase] + O2 = a 14alpha-formyl steroid + oxidized [NADPH--hemoprotein reductase] + 2 H2O + H(+). The catalysed reaction is a 14alpha-formyl steroid + reduced [NADPH--hemoprotein reductase] + O2 = a Delta(14) steroid + formate + oxidized [NADPH--hemoprotein reductase] + H2O + 2 H(+). The enzyme catalyses lanosterol + 3 reduced [NADPH--hemoprotein reductase] + 3 O2 = 4,4-dimethyl-5alpha-cholesta-8,14,24-trien-3beta-ol + formate + 3 oxidized [NADPH--hemoprotein reductase] + 4 H2O + 4 H(+). It catalyses the reaction lanosterol + reduced [NADPH--hemoprotein reductase] + O2 = 32-hydroxylanosterol + oxidized [NADPH--hemoprotein reductase] + H2O + H(+). It carries out the reaction 32-hydroxylanosterol + reduced [NADPH--hemoprotein reductase] + O2 = 32-oxolanosterol + oxidized [NADPH--hemoprotein reductase] + 2 H2O + H(+). The catalysed reaction is 32-oxolanosterol + reduced [NADPH--hemoprotein reductase] + O2 = 4,4-dimethyl-5alpha-cholesta-8,14,24-trien-3beta-ol + formate + oxidized [NADPH--hemoprotein reductase] + H2O + 2 H(+). The enzyme catalyses eburicol + 3 reduced [NADPH--hemoprotein reductase] + 3 O2 = 14-demethyleburicol + formate + 3 oxidized [NADPH--hemoprotein reductase] + 4 H2O + 4 H(+). It catalyses the reaction eburicol + reduced [NADPH--hemoprotein reductase] + O2 = 32-hydroxyeburicol + oxidized [NADPH--hemoprotein reductase] + H2O + H(+). It carries out the reaction 32-hydroxyeburicol + reduced [NADPH--hemoprotein reductase] + O2 = 32-oxoeburicol + oxidized [NADPH--hemoprotein reductase] + 2 H2O + H(+). The catalysed reaction is 32-oxoeburicol + reduced [NADPH--hemoprotein reductase] + O2 = 14-demethyleburicol + formate + oxidized [NADPH--hemoprotein reductase] + H2O + 2 H(+). It participates in steroid biosynthesis; zymosterol biosynthesis; zymosterol from lanosterol: step 1/6. Functionally, sterol 14alpha-demethylase that plays a critical role in the third module of ergosterol biosynthesis pathway, being ergosterol the major sterol component in fungal membranes that participates in a variety of functions. The third module or late pathway involves the ergosterol synthesis itself through consecutive reactions that mainly occur in the endoplasmic reticulum (ER) membrane. In filamentous fungi, during the initial step of this module, lanosterol (lanosta-8,24-dien-3beta-ol) can be metabolized to eburicol. Sterol 14alpha-demethylase catalyzes the three-step oxidative removal of the 14alpha-methyl group (C-32) of both these sterols in the form of formate, and converts eburicol and lanosterol to 14-demethyleburicol (4,4,24-trimethylergosta-8,14,24(28)-trienol) and 4,4-dimethyl-5alpha-cholesta-8,14,24-trien-3beta-ol, respectively, which are further metabolized by other enzymes in the pathway to ergosterol. Can also use substrates not intrinsic to fungi, such as 24,25-dihydrolanosterol (DHL), producing 4,4-dimethyl-8,14-cholestadien-3-beta-ol, but at lower rates than the endogenous substrates. The protein is Lanosterol 14-alpha demethylase (ERG11) of Candida tropicalis (Yeast).